A 217-amino-acid chain; its full sequence is N-(5'-phosphoribosyl)anthranilate isomerase (217 aa).

Belongs to the TrpF family.

It carries out the reaction N-(5-phospho-beta-D-ribosyl)anthranilate = 1-(2-carboxyphenylamino)-1-deoxy-D-ribulose 5-phosphate. Its pathway is amino-acid biosynthesis; L-tryptophan biosynthesis; L-tryptophan from chorismate: step 3/5. This is N-(5'-phosphoribosyl)anthranilate isomerase from Chlorobium luteolum (strain DSM 273 / BCRC 81028 / 2530) (Pelodictyon luteolum).